Here is a 106-residue protein sequence, read N- to C-terminus: Valine dehydrogenase (106 aa).

Lys-91 is a catalytic residue.

The protein belongs to the Glu/Leu/Phe/Val dehydrogenases family. Homodimer.

It localises to the cytoplasm. It carries out the reaction L-valine + NAD(+) + H2O = 3-methyl-2-oxobutanoate + NH4(+) + NADH + H(+). It participates in amino-acid degradation; L-valine degradation. In terms of biological role, oxidative deamination of branched-chain amino acids. The catabolism of valine is the major source of fatty acid precursors for macrolide biosynthesis and a vital source of antibiotic precursors. The protein is Valine dehydrogenase (vdh) of Streptomyces ambofaciens.